The following is a 216-amino-acid chain: 3-isopropylmalate dehydratase small subunit (216 aa).

Belongs to the LeuD family. LeuD type 1 subfamily. As to quaternary structure, heterodimer of LeuC and LeuD.

The enzyme catalyses (2R,3S)-3-isopropylmalate = (2S)-2-isopropylmalate. It participates in amino-acid biosynthesis; L-leucine biosynthesis; L-leucine from 3-methyl-2-oxobutanoate: step 2/4. In terms of biological role, catalyzes the isomerization between 2-isopropylmalate and 3-isopropylmalate, via the formation of 2-isopropylmaleate. The sequence is that of 3-isopropylmalate dehydratase small subunit from Psychrobacter arcticus (strain DSM 17307 / VKM B-2377 / 273-4).